A 1281-amino-acid polypeptide reads, in one-letter code: Dynactin subunit 1 (1281 aa).

Positions 1-25 (MAQSKRHVYSRTPSGSRMSAEASAR) are disordered. In terms of domain architecture, CAP-Gly spans 48–90 (GATLFATGKWVGVILDEAKGKNDGTVQGRKYFTCDEGHGIFVR). The disordered stretch occupies residues 99–225 (DGADTTSPET…EEEGLRAQVR (127 aa)). Polar residues predominate over residues 102–114 (DTTSPETPDSSAS). A phosphothreonine mark is found at threonine 108, threonine 145, threonine 146, and threonine 147. Residues 129–152 (SKLRGPKPKKAPTARKTTTRRPKP) are compositionally biased toward basic residues. A compositionally biased stretch (low complexity) spans 161–205 (AGASSSLGPSGSASAGELSSSEPSTPAQTPLAAPIIPTPALTSPG). Phosphoserine occurs at positions 179 and 212. A compositionally biased stretch (basic and acidic residues) spans 214–225 (SKEEEGLRAQVR). Coiled coils occupy residues 217 to 540 (EEGL…QQEA) and 952 to 1043 (IKEL…QSKR). Residues 911-1281 (EYDAERPPSK…LHQLHDRLIS (371 aa)) are interaction with HPS6. A disordered region spans residues 1065–1084 (GEEQQRGGAPGQAPGIVPGP).

It belongs to the dynactin 150 kDa subunit family. As to quaternary structure, monomer and homodimer. Subunit of dynactin, a multiprotein complex part of a tripartite complex with dynein and a adapter, such as BICDL1, BICD2 or HOOK3. The dynactin complex is built around ACTR1A/ACTB filament and consists of an actin-related filament composed of a shoulder domain, a pointed end and a barbed end. Its length is defined by its flexible shoulder domain. The soulder is composed of 2 DCTN1 subunits, 4 DCTN2 and 2 DCTN3. DCTN1/p150(glued) binds directly to microtubules and to cytoplasmic dynein. The 4 DCNT2 (via N-terminus) bind the ACTR1A filament and act as molecular rulers to determine the length. The pointed end is important for binding dynein-dynactin cargo adapters. Consists of 4 subunits: ACTR10, DCNT4, DCTN5 and DCTN6. The barbed end is composed of a CAPZA1:CAPZB heterodimers, which binds ACTR1A/ACTB filament and dynactin and stabilizes dynactin. Interacts with the C-terminus of MAPRE1, MAPRE2 and MAPRE3. Interacts (via C-terminus) with SNX6. Interacts with CLN3, DYNAP, ECPAS and FBXL5. Interacts with MISP; this interaction regulates its distribution at the cell cortex. Interacts with CEP131. Interacts with CEP126. Interacts with CLIP1. Interacts with dynein intermediate chain and dynein heavy chain. Interacts with PLK1 (via POLO-box domain). Interacts with TBCB. Binds preferentially to tyrosinated microtubules than to detyrosinated microtubules. Interacts with PARD6A. Interacts with HPS6. Interacts with KIF3A. Interacts with BICD2. Interacts with DST (isoform 9). Interacts with DST (isoform 1). Identified in a complex with MREG and RILP. Interacts with BCCIP (isoform 2/alpha). Interacts with DCDC1. Interacts with AKNA. Interacts with DYNC1I2. Interacts with RUFY3 and RUFY4. Ubiquitinated by a SCF complex containing FBXL5, leading to its degradation by the proteasome. Post-translationally, phosphorylation by SLK at Thr-145, Thr-146 and Thr-147 targets DCTN1 to the centrosome. It is uncertain if SLK phosphorylates all three threonines or one or two of them. PLK1-mediated phosphorylation at Ser-179 is essential for its localization in the nuclear envelope, promotes its dissociation from microtubules during early mitosis and positively regulates nuclear envelope breakdown during prophase.

The protein localises to the cytoplasm. The protein resides in the cytoskeleton. It localises to the microtubule organizing center. It is found in the centrosome. Its subcellular location is the centriole. The protein localises to the spindle. The protein resides in the nucleus envelope. It localises to the cell cortex. In terms of biological role, part of the dynactin complex that activates the molecular motor dynein for ultra-processive transport along microtubules. Plays a key role in dynein-mediated retrograde transport of vesicles and organelles along microtubules by recruiting and tethering dynein to microtubules. Binds to both dynein and microtubules providing a link between specific cargos, microtubules and dynein. Essential for targeting dynein to microtubule plus ends, recruiting dynein to membranous cargos and enhancing dynein processivity (the ability to move along a microtubule for a long distance without falling off the track). Can also act as a brake to slow the dynein motor during motility along the microtubule. Can regulate microtubule stability by promoting microtubule formation, nucleation and polymerization and by inhibiting microtubule catastrophe in neurons. Inhibits microtubule catastrophe by binding both to microtubules and to tubulin, leading to enhanced microtubule stability along the axon. Plays a role in metaphase spindle orientation. Plays a role in centriole cohesion and subdistal appendage organization and function. Its recruitment to the centriole in a KIF3A-dependent manner is essential for the maintenance of centriole cohesion and the formation of subdistal appendage. Also required for microtubule anchoring at the mother centriole. Plays a role in primary cilia formation. The polypeptide is Dynactin subunit 1 (DCTN1) (Sus scrofa (Pig)).